The following is a 682-amino-acid chain: Methionine synthase reductase (682 aa).

Positions 4–147 (FLIAFGSQTG…EVEPWIEKFF (144 aa)) constitute a Flavodoxin-like domain. Residue 93-124 (LLGLGDSNYSSYQTIPRKIDKQLTALGANRLF) coordinates FMN. The FAD-binding FR-type domain maps to 271 to 516 (TKPFEVLVVS…GKEPARFRLP (246 aa)). Lys293 is an NADP(+) binding site. Residues 455–458 (RPYS) and 488–491 (GLAT) contribute to the FAD site. NADP(+) contacts are provided by residues 607 to 609 (RVQ) and Asp643. Residue Trp681 participates in FAD binding.

Requires FAD as cofactor. FMN is required as a cofactor.

The enzyme catalyses 2 methylcob(III)alamin-[methionine synthase] + 2 S-adenosyl-L-homocysteine + NADP(+) + H(+) = 2 cob(II)alamin-[methionine synthase] + 2 S-adenosyl-L-methionine + NADPH. Functionally, involved in the reductive regeneration of cob(I)alamin cofactor required for the maintenance of methionine synthase in a functional state. This chain is Methionine synthase reductase, found in Caenorhabditis elegans.